Consider the following 120-residue polypeptide: Large ribosomal subunit protein bL19 (120 aa).

Belongs to the bacterial ribosomal protein bL19 family.

This protein is located at the 30S-50S ribosomal subunit interface and may play a role in the structure and function of the aminoacyl-tRNA binding site. In Nostoc sp. (strain PCC 7120 / SAG 25.82 / UTEX 2576), this protein is Large ribosomal subunit protein bL19 (rplS).